The chain runs to 748 residues: Ribonucleoprotein PTB-binding 1 (748 aa).

Residues 1–42 (MAADVSVTHRPPLSPEAEAEAETPETVDRRTPEQELPPLDPE) form a disordered region. Position 2 is an N-acetylalanine (A2). 2 positions are modified to phosphoserine: S6 and S14. At T31 the chain carries Phosphothreonine. The Nuclear localization signal motif lies at 45-60 (RKRLEHTERQFRNRRK). 3 RRM domains span residues 59-130 (RKIL…LQPT), 132-210 (ALLC…WTDA), and 221-299 (RCLC…FCAP). The interaction with PTBP1 stretch occupies residues 307–401 (LAALIAAQAT…QSQSQKKPGI (95 aa)). 3 disordered regions span residues 390–505 (QSQS…GEPP), 525–647 (SNLA…PLSH), and 672–731 (KAVG…QHSQ). Phosphothreonine is present on T469. A phosphoserine mark is found at S480, S576, S626, and S630. The span at 675–685 (GSSPMGSSEGL) shows a compositional bias: low complexity. A phosphoserine mark is found at S716 and S720. A Nuclear localization signal motif is present at residues 743–746 (KRKR).

Interacts with PTBP1, RAVER2, VCL and ACTN1. Part of a complex containing RAVER1, VCL and ACTN1. Ubiquitous. Detected in aorta, brain, gut, heart, kidney, liver, spleen, uterus and skeletal muscle.

The protein resides in the nucleus. Its subcellular location is the cytoplasm. Cooperates with PTBP1 to modulate regulated alternative splicing events. Promotes exon skipping. Cooperates with PTBP1 to modulate switching between mutually exclusive exons during maturation of the TPM1 pre-mRNA. In Rattus norvegicus (Rat), this protein is Ribonucleoprotein PTB-binding 1 (Raver1).